The following is a 434-amino-acid chain: UDP-N-acetylglucosamine 1-carboxyvinyltransferase (434 aa).

Residue 22-23 (KN) coordinates phosphoenolpyruvate. Arginine 97 contacts UDP-N-acetyl-alpha-D-glucosamine. The Proton donor role is filled by aspartate 121. 2 residues coordinate UDP-N-acetyl-alpha-D-glucosamine: aspartate 319 and methionine 341.

It belongs to the EPSP synthase family. MurA subfamily.

Its subcellular location is the cytoplasm. It catalyses the reaction phosphoenolpyruvate + UDP-N-acetyl-alpha-D-glucosamine = UDP-N-acetyl-3-O-(1-carboxyvinyl)-alpha-D-glucosamine + phosphate. Its pathway is cell wall biogenesis; peptidoglycan biosynthesis. In terms of biological role, cell wall formation. Adds enolpyruvyl to UDP-N-acetylglucosamine. The protein is UDP-N-acetylglucosamine 1-carboxyvinyltransferase of Porphyromonas gingivalis (strain ATCC BAA-308 / W83).